We begin with the raw amino-acid sequence, 245 residues long: Ureidoacrylate amidohydrolase RutB (245 aa).

The Proton acceptor role is filled by Asp41. The active site involves Lys150. Cys183 (nucleophile) is an active-site residue.

It belongs to the isochorismatase family. RutB subfamily.

The enzyme catalyses (Z)-3-ureidoacrylate + H2O + H(+) = (Z)-3-aminoacrylate + NH4(+) + CO2. It catalyses the reaction (Z)-3-ureidoacrylate + H2O = (Z)-3-aminoacrylate + carbamate + H(+). It carries out the reaction (Z)-2-methylureidoacrylate + H2O + H(+) = (Z)-2-methylaminoacrylate + NH4(+) + CO2. In terms of biological role, hydrolyzes ureidoacrylate to form aminoacrylate and carbamate. The carbamate hydrolyzes spontaneously, thereby releasing one of the nitrogen atoms of the pyrimidine ring as ammonia and one of its carbon atoms as CO2. In Pseudomonas savastanoi pv. phaseolicola (strain 1448A / Race 6) (Pseudomonas syringae pv. phaseolicola (strain 1448A / Race 6)), this protein is Ureidoacrylate amidohydrolase RutB.